The following is a 426-amino-acid chain: Mediator of RNA polymerase II transcription subunit 1 (426 aa).

Positions 319-349 are disordered; it reads ISTSNSGSVQPKPRRKSSVLSNRRPSMTDSM. Positions 336 to 347 are enriched in polar residues; the sequence is SVLSNRRPSMTD.

The protein belongs to the Mediator complex subunit 1 family. In terms of assembly, component of the Mediator complex.

The protein resides in the nucleus. Component of the Mediator complex, a coactivator involved in the regulated transcription of nearly all RNA polymerase II-dependent genes. Mediator functions as a bridge to convey information from gene-specific regulatory proteins to the basal RNA polymerase II transcription machinery. Mediator is recruited to promoters by direct interactions with regulatory proteins and serves as a scaffold for the assembly of a functional preinitiation complex with RNA polymerase II and the general transcription factors. This chain is Mediator of RNA polymerase II transcription subunit 1 (MED1), found in Kluyveromyces lactis (strain ATCC 8585 / CBS 2359 / DSM 70799 / NBRC 1267 / NRRL Y-1140 / WM37) (Yeast).